The chain runs to 93 residues: Parbolysin P2 (93 aa).

2 cysteine pairs are disulfide-bonded: cysteine 16-cysteine 37 and cysteine 22-cysteine 33.

Belongs to the worm cytolysin family. Localized within the skin and proboscis and are most readily isolated from body mucus secretions.

The protein localises to the secreted. Its function is as follows. Cytolysin that shows hemolytic activity (on bovine erythrocytes, HC(50)=5.75 mg/ml). This hemolytic activity is completely inhibited by small unilamelar vesicles composed of PC/PG, PC/PI and PC/PS in 1:1 molar ratios (with at least 100 mg/ml concentration). This is Parbolysin P2 from Parborlasia corrugatus (Antarctic nemertean worm).